The chain runs to 392 residues: Formate-dependent phosphoribosylglycinamide formyltransferase (392 aa).

Residues 22–23 (EL) and Glu82 each bind N(1)-(5-phospho-beta-D-ribosyl)glycinamide. Residues Arg114, Lys155, 160-165 (SSGKGQ), 195-198 (EGEV), and Glu203 contribute to the ATP site. The region spanning 119-308 (RLAAETLALP…EFALHVRAFL (190 aa)) is the ATP-grasp domain. Positions 267 and 279 each coordinate Mg(2+). N(1)-(5-phospho-beta-D-ribosyl)glycinamide is bound by residues Asp286, Lys355, and 362-363 (RR).

The protein belongs to the PurK/PurT family. As to quaternary structure, homodimer.

The catalysed reaction is N(1)-(5-phospho-beta-D-ribosyl)glycinamide + formate + ATP = N(2)-formyl-N(1)-(5-phospho-beta-D-ribosyl)glycinamide + ADP + phosphate + H(+). Its pathway is purine metabolism; IMP biosynthesis via de novo pathway; N(2)-formyl-N(1)-(5-phospho-D-ribosyl)glycinamide from N(1)-(5-phospho-D-ribosyl)glycinamide (formate route): step 1/1. Functionally, involved in the de novo purine biosynthesis. Catalyzes the transfer of formate to 5-phospho-ribosyl-glycinamide (GAR), producing 5-phospho-ribosyl-N-formylglycinamide (FGAR). Formate is provided by PurU via hydrolysis of 10-formyl-tetrahydrofolate. The polypeptide is Formate-dependent phosphoribosylglycinamide formyltransferase (Edwardsiella ictaluri (strain 93-146)).